A 164-amino-acid chain; its full sequence is Small ribosomal subunit protein uS9 (164 aa).

It belongs to the universal ribosomal protein uS9 family.

In Rickettsia bellii (strain OSU 85-389), this protein is Small ribosomal subunit protein uS9.